We begin with the raw amino-acid sequence, 884 residues long: E3 ubiquitin-protein ligase BRE1-like 1 (884 aa).

The tract at residues 1-37 is disordered; it reads MGSTGEPDRKRRLSSSVAPGGGAPVSPAKRLAVAPTS. Residues 49 to 86 are a coiled coil; sequence YKNQKLSEQLEAHKFEYRALENKFAGLKEKQRTHNETL. Residues 107-127 are disordered; the sequence is KSGSPNSSPGSGHNNVQKDGT. A compositionally biased stretch (low complexity) spans 108–121; sequence SGSPNSSPGSGHNN. Coiled-coil stretches lie at residues 216-541, 580-663, 696-762, and 789-827; these read LNNV…ELKL, SKLE…LQQI, RNLQ…QSLD, and KKRIEDDLEVMSRKASSLRAKARESAVLEKLRHEVKEYR. The RING-type zinc-finger motif lies at 832–871; it reads CGICHDRQKEVVITKCYHLFCNQCIQKSLGNRQRRCPSCS.

The protein belongs to the BRE1 family.

The protein resides in the nucleus. It catalyses the reaction S-ubiquitinyl-[E2 ubiquitin-conjugating enzyme]-L-cysteine + [acceptor protein]-L-lysine = [E2 ubiquitin-conjugating enzyme]-L-cysteine + N(6)-ubiquitinyl-[acceptor protein]-L-lysine.. It participates in protein modification; protein ubiquitination. Functionally, E3 ubiquitin-protein ligase that monoubiquitinates H2B to form H2BK143ub1. H2BK143ub1 gives a specific tag for epigenetic transcriptional activation and is also prerequisite for H3K4me and maybe H3K79me. It thereby plays a central role in histone code and gene regulation. Forms a ubiquitin ligase complex in cooperation with the E2 enzyme UBC2/RAD6. In Oryza sativa subsp. indica (Rice), this protein is E3 ubiquitin-protein ligase BRE1-like 1 (BRE1A).